The primary structure comprises 67 residues: UPF0337 protein CC_0938 (67 aa).

The tract at residues Ala-37–Leu-67 is disordered. The span at Ala-41 to Gln-61 shows a compositional bias: basic and acidic residues.

Belongs to the UPF0337 (CsbD) family.

The chain is UPF0337 protein CC_0938 from Caulobacter vibrioides (strain ATCC 19089 / CIP 103742 / CB 15) (Caulobacter crescentus).